Consider the following 149-residue polypeptide: Large ribosomal subunit protein uL13 (149 aa).

It belongs to the universal ribosomal protein uL13 family. In terms of assembly, part of the 50S ribosomal subunit.

Functionally, this protein is one of the early assembly proteins of the 50S ribosomal subunit, although it is not seen to bind rRNA by itself. It is important during the early stages of 50S assembly. This Chlamydia pneumoniae (Chlamydophila pneumoniae) protein is Large ribosomal subunit protein uL13.